A 516-amino-acid chain; its full sequence is L-amino acid oxidase Lm29 (516 aa).

A signal peptide spans 1-18 (MNVFFMFSLLFLAALGSC). Cysteine 28 and cysteine 191 form a disulfide bridge. FAD contacts are provided by residues 61 to 62 (MS), 81 to 82 (EA), arginine 89, and 105 to 108 (GPMR). Substrate is bound at residue arginine 108. A glycan (N-linked (GlcNAc...) asparagine) is linked at asparagine 190. Histidine 241 contacts substrate. Valine 279 lines the FAD pocket. Cysteine 349 and cysteine 430 are disulfide-bonded. Asparagine 379 carries an N-linked (GlcNAc...) asparagine glycan. Residue tyrosine 390 coordinates substrate. Residues glutamate 475 and 482–487 (GWIDST) contribute to the FAD site. 482 to 483 (GW) is a binding site for substrate.

The protein belongs to the flavin monoamine oxidase family. FIG1 subfamily. As to quaternary structure, homodimer; non-covalently linked. It depends on FAD as a cofactor. Expressed by the venom gland.

The protein localises to the secreted. It carries out the reaction an L-alpha-amino acid + O2 + H2O = a 2-oxocarboxylate + H2O2 + NH4(+). The catalysed reaction is L-leucine + O2 + H2O = 4-methyl-2-oxopentanoate + H2O2 + NH4(+). It catalyses the reaction L-phenylalanine + O2 + H2O = 3-phenylpyruvate + H2O2 + NH4(+). The enzyme catalyses L-tryptophan + O2 + H2O = indole-3-pyruvate + H2O2 + NH4(+). It carries out the reaction L-methionine + O2 + H2O = 4-methylsulfanyl-2-oxobutanoate + H2O2 + NH4(+). The catalysed reaction is L-isoleucine + O2 + H2O = (S)-3-methyl-2-oxopentanoate + H2O2 + NH4(+). It catalyses the reaction L-tyrosine + O2 + H2O = 3-(4-hydroxyphenyl)pyruvate + H2O2 + NH4(+). Functionally, catalyzes an oxidative deamination of predominantly hydrophobic and aromatic L-amino acids, thus producing hydrogen peroxide that may contribute to the diverse toxic effects of this enzyme. Is highly active on L-Met=L-Leu&gt;&gt;L-Phe&gt;L-Trp&gt;L-Tyr&gt;L-Ile, and weakly or not active on L-His, L-Arg, L-Val, L-Gln, L-Thr, L-Lys, and L-Ser. Exhibits a low myotoxicity (a mild myonecrosis is observed after injection in mice quadriceps muscle). In vitro, is cytotoxic to a lot of human cell lines, including AGS (IC(50)=22.7 ug/ml), MCF-7 (IC(50)=1.4 ug/ml), HL-60, HeLa and Jurkat cells, as well as to the parasite Leishmania brasiliensis (IC(50)=2.22 ug/ml). This cytotoxicity is dependent on the production of hydrogen peroxyde, since it is inhibited by catalase, a hydrogen peroxyde scavenger. The protein is L-amino acid oxidase Lm29 of Lachesis muta (South American bushmaster).